The sequence spans 678 residues: MGHSDGDHGSDLSADDSPWSEGSWSDDDDEGSLSFEDSGEGSDAESDEPDAPAVEESDSSEDEVAPRNTIGDVPLEWYKNEEHIGYDITGSKIKKRDREGRIEAYLRNADDAKNWRKIYDEYNDEEVQITKEEAKIISRLLKGKTPHTNVDPYPDYVDWFEYDGKGHPLSSAPEPKRRFVPSRWEQKKVVKLVRAIRKGWIKFDKPKEEPNFYLLWGDETDTADNKRQGLSYIPAPKPNLPGHEESYNPSVEYIPTQEEIDSYQLMYEEDRPKFIPRKFDCLRSVPAYEKALREGFDRCLDLYLCPRTRKKRINIDPESLKPKLPSKKDLRPYPRTCYLEFKGHNGPVKSLSVEATGQWIASGSSDGTIRVWEVETGRCIKVWNVGGVVHRIAWNPSPDRHILAAVVDHDLLLLNAEVGDEDAQMKTKGLLQIEELAQEEDNGDKKPAVKWVKHEKFDGIMLIHHKAVSTVEWHFKGDYFTTVVPSGDSRAVLLHQLSKKHSHHPFRKLPGLPIAAVFHPSQKMFFVATKKFVQVYDLQKAQLVKKLESGVREISSISIHPGGDNVIVGSKDGKLCWFDTDLSTRPYKTLKNHSKDITNVTFHRKYPLFASSSEDCTAYVFHGMVYSDLNQNPLIVPLEILRGHSSSDGRGVLDCKFHPRQPWLFTAGADSVVRLYCD.

Basic and acidic residues predominate over residues 1 to 10 (MGHSDGDHGS). The tract at residues 1–73 (MGHSDGDHGS…VAPRNTIGDV (73 aa)) is disordered. The segment covering 24-63 (WSDDDDEGSLSFEDSGEGSDAESDEPDAPAVEESDSSEDE) has biased composition (acidic residues). WD repeat units lie at residues 343 to 384 (GHNG…KVWN), 386 to 424 (GGVV…EDAQ), 463 to 505 (IHHK…SHHP), 508 to 548 (KLPG…KKLE), 549 to 588 (SGVR…RPYK), 592 to 631 (NHSK…DLNQ), and 647 to 678 (SDGR…LYCD).

This sequence belongs to the WD repeat BOP1/ERB1 family.

Its subcellular location is the nucleus. It localises to the nucleolus. It is found in the nucleoplasm. Required for maturation of ribosomal RNAs and formation of the large ribosomal subunit. This chain is Ribosome biogenesis protein BOP1 homolog, found in Oryza sativa subsp. japonica (Rice).